The sequence spans 481 residues: MIARTKIICTIGPATNTPEMLEKLLDAGMNVARLNFSHGTHESHGRTIAILKELREKRQVPLAIMLDTKGPEIRLGQVESPIKVKPGDRLTLTSKEILGSKEAGVTLYPSCVFPFVRERAPVLIDDGYIQAVVVNAQEHLIEIEFQNSGEIKSNKSLSIKDIDVALPFMTEKDITDLKFGVEQELDLIAASFVRCNEDIDSMRKVLENFGRPNMPIIAKIENHLGVQNFQEIAKASDGIMIARGDLGIELSIVEVPALQKFMARVSRETGRFCITATQMLESMIRNPLPTRAEVSDVANAIHDGTSAVMLSGETASGTYPIEAVKTMRSIIQETEKSFDYQAFFQLNDKNSALKVSPYLEAIGASGIQIAEKASAKAIIVYTQTGGSPMFLSKYRPYLPIIAVTPNRNVYYRLAVEWGVYPMLTSESNRTVWRHQACVYGVEKGILSNYDKILVFSRGAGMQDTNNLTLTTVNDVLSPSLE.

A substrate-binding site is contributed by arginine 33. Asparagine 35, serine 37, aspartate 67, and threonine 68 together coordinate K(+). 35-38 (NFSH) contacts ATP. ATP contacts are provided by arginine 74 and lysine 155. Residue glutamate 221 participates in Mg(2+) binding. Substrate is bound by residues glycine 244, aspartate 245, and threonine 277. Residue aspartate 245 coordinates Mg(2+).

Belongs to the pyruvate kinase family. As to quaternary structure, homotetramer. The cofactor is Mg(2+). K(+) is required as a cofactor.

It catalyses the reaction pyruvate + ATP = phosphoenolpyruvate + ADP + H(+). Its pathway is carbohydrate degradation; glycolysis; pyruvate from D-glyceraldehyde 3-phosphate: step 5/5. The chain is Pyruvate kinase (pyk) from Chlamydia muridarum (strain MoPn / Nigg).